The primary structure comprises 887 residues: Valine--tRNA ligase (887 aa).

Residues Pro-47–His-57 carry the 'HIGH' region motif. The 'KMSKS' region motif lies at Lys-527 to Ser-531. Lys-530 lines the ATP pocket. A coiled-coil region spans residues Leu-817 to Lys-885.

This sequence belongs to the class-I aminoacyl-tRNA synthetase family. ValS type 1 subfamily. As to quaternary structure, monomer.

It is found in the cytoplasm. The enzyme catalyses tRNA(Val) + L-valine + ATP = L-valyl-tRNA(Val) + AMP + diphosphate. In terms of biological role, catalyzes the attachment of valine to tRNA(Val). As ValRS can inadvertently accommodate and process structurally similar amino acids such as threonine, to avoid such errors, it has a 'posttransfer' editing activity that hydrolyzes mischarged Thr-tRNA(Val) in a tRNA-dependent manner. The chain is Valine--tRNA ligase from Geobacter sulfurreducens (strain ATCC 51573 / DSM 12127 / PCA).